Reading from the N-terminus, the 206-residue chain is uncharacterized protein (206 aa).

The chain crosses the membrane as a helical span at residues 166–186 (FYTGLSVIVGGATALALGLFF).

Its subcellular location is the membrane. This is an uncharacterized protein from Dictyostelium discoideum (Social amoeba).